Reading from the N-terminus, the 514-residue chain is 2,3-bisphosphoglycerate-independent phosphoglycerate mutase (514 aa).

Mn(2+) is bound by residues Asp-12 and Ser-62. Residue Ser-62 is the Phosphoserine intermediate of the active site. Substrate contacts are provided by residues His-123, 153–154 (RD), Arg-185, Arg-191, 260–263 (RPDR), and Lys-335. Residues Asp-402, His-406, Asp-443, His-444, and His-462 each coordinate Mn(2+).

Belongs to the BPG-independent phosphoglycerate mutase family. Monomer. Requires Mn(2+) as cofactor.

It catalyses the reaction (2R)-2-phosphoglycerate = (2R)-3-phosphoglycerate. The protein operates within carbohydrate degradation; glycolysis; pyruvate from D-glyceraldehyde 3-phosphate: step 3/5. In terms of biological role, catalyzes the interconversion of 2-phosphoglycerate and 3-phosphoglycerate. The protein is 2,3-bisphosphoglycerate-independent phosphoglycerate mutase of Lachnoclostridium phytofermentans (strain ATCC 700394 / DSM 18823 / ISDg) (Clostridium phytofermentans).